Here is a 129-residue protein sequence, read N- to C-terminus: Natriuretic peptides B (129 aa).

The signal sequence occupies residues 1 to 26 (MDPQTALSRALLLLLFLHLSLLGCRS). Cys-107 and Cys-123 are disulfide-bonded.

Belongs to the natriuretic peptide family. Post-translationally, the precursor molecule is proteolytically cleaved, possibly by FURIN or CORIN, to produce the active peptide. May undergo further proteolytic cleavage by various proteases such as DPP4, MME and possibly FAP, to give rise to a variety of shorter peptides. May be cleaved at Pro-99 by the prolyl endopeptidase FAP (seprase) activity (in vitro). May be degraded by IDE. During IDE degradation, the resulting products initially increase the activation of NPR1 and can also stimulate NPR2 to produce cGMP before the fragments are completely degraded and inactivated by IDE (in vitro).

It is found in the secreted. Its function is as follows. Cardiac hormone that plays a key role in mediating cardio-renal homeostasis. May also function as a paracrine antifibrotic factor in the heart. Acts by specifically binding and stimulating NPR1 to produce cGMP, which in turn activates effector proteins that drive various biological responses. Involved in regulating the extracellular fluid volume and maintaining the fluid-electrolyte balance through natriuresis, diuresis, vasorelaxation, and inhibition of renin and aldosterone secretion. Binds the clearance receptor NPR3. The polypeptide is Natriuretic peptides B (NPPB) (Bos taurus (Bovine)).